Here is a 1182-residue protein sequence, read N- to C-terminus: WD repeat-containing protein on Y chromosome (1182 aa).

WD repeat units lie at residues 155 to 199 (EEIT…LRSA), 323 to 362 (RIPLGVSVFYVSEIKNILVTGGPDTFVRIWDVYISSEPSA), 366 to 405 (GHNGGIVAVFVQPEENKVYSVDYHKIIKVWDLQEHTLLQT), 456 to 495 (THAAPVSVVLYNRLFRNIVTCGLDSYIIVWDPWTGRRKII), 508 to 547 (TIDIEITAACFDPLEQFLLTGARDGSLKIWNYNNAVVVRN), 595 to 635 (FHTD…RRYN), 740 to 779 (KTGDCVLTMATDRKNRFLYTGTAFGYIKVWHIVNYCIPKA), and 823 to 862 (GHLKAINSIGFINLPKIIFSGSHDYSCRLWTQGGRYLGTL). The disordered stretch occupies residues 1031–1182 (TKAGANLDQP…PKAKTDRETH (152 aa)). Composition is skewed to low complexity over residues 1079–1092 (GVSSGYGKVSVSQG) and 1103–1121 (TTSLSKPKTSSSPSKPKGS).

The protein is WD repeat-containing protein on Y chromosome of Drosophila virilis (Fruit fly).